A 201-amino-acid chain; its full sequence is Dephospho-CoA kinase (201 aa).

The DPCK domain maps to 4–201 (AFFVTASIAC…VIQEISKGKM (198 aa)). Position 12-17 (12-17 (ACGKST)) interacts with ATP.

The protein belongs to the CoaE family.

The protein localises to the cytoplasm. It carries out the reaction 3'-dephospho-CoA + ATP = ADP + CoA + H(+). Its pathway is cofactor biosynthesis; coenzyme A biosynthesis; CoA from (R)-pantothenate: step 5/5. Catalyzes the phosphorylation of the 3'-hydroxyl group of dephosphocoenzyme A to form coenzyme A. The chain is Dephospho-CoA kinase from Campylobacter jejuni (strain RM1221).